The sequence spans 194 residues: Xanthine phosphoribosyltransferase (194 aa).

Positions 20 and 27 each coordinate xanthine. 128–132 (ANGQA) lines the 5-phospho-alpha-D-ribose 1-diphosphate pocket. Lys156 is a xanthine binding site.

Belongs to the purine/pyrimidine phosphoribosyltransferase family. Xpt subfamily. Homodimer.

The protein resides in the cytoplasm. It carries out the reaction XMP + diphosphate = xanthine + 5-phospho-alpha-D-ribose 1-diphosphate. It participates in purine metabolism; XMP biosynthesis via salvage pathway; XMP from xanthine: step 1/1. Its function is as follows. Converts the preformed base xanthine, a product of nucleic acid breakdown, to xanthosine 5'-monophosphate (XMP), so it can be reused for RNA or DNA synthesis. The polypeptide is Xanthine phosphoribosyltransferase (Oceanobacillus iheyensis (strain DSM 14371 / CIP 107618 / JCM 11309 / KCTC 3954 / HTE831)).